Reading from the N-terminus, the 341-residue chain is GDP-mannose transporter GONST5 (341 aa).

Transmembrane regions (helical) follow at residues leucine 17–phenylalanine 37, phenylalanine 44–isoleucine 64, phenylalanine 89–phenylalanine 109, leucine 141–phenylalanine 161, isoleucine 192–leucine 212, isoleucine 233–isoleucine 253, threonine 260–phenylalanine 280, and isoleucine 284–tyrosine 304. Residues asparagine 33–serine 152 form the EamA domain.

The protein belongs to the TPT transporter family. TPT (TC 2.A.7.9) subfamily. Expressed in rosette leaves, flowers and siliques.

The protein resides in the golgi apparatus membrane. Its function is as follows. GDP-mannose transporter that may be involved in the import of GDP-mannose from the cytoplasm into the Golgi lumen. The sequence is that of GDP-mannose transporter GONST5 (GONST5) from Arabidopsis thaliana (Mouse-ear cress).